The primary structure comprises 146 residues: Large ribosomal subunit protein mL49 (146 aa).

The transit peptide at 1–38 (MISSCVTRCFGRGKCLPGPATASIYQTIRCISTNSNKA) directs the protein to the mitochondrion.

The protein belongs to the mitochondrion-specific ribosomal protein mL49 family. Component of the mitochondrial large ribosomal subunit (mt-LSU). Mature yeast 74S mitochondrial ribosomes consist of a small (37S) and a large (54S) subunit. The 37S small subunit contains a 15S ribosomal RNA (15S mt-rRNA) and 34 different proteins. The 54S large subunit contains a 21S rRNA (21S mt-rRNA) and 46 different proteins.

The protein localises to the mitochondrion. Functionally, component of the mitochondrial ribosome (mitoribosome), a dedicated translation machinery responsible for the synthesis of mitochondrial genome-encoded proteins, including at least some of the essential transmembrane subunits of the mitochondrial respiratory chain. The mitoribosomes are attached to the mitochondrial inner membrane and translation products are cotranslationally integrated into the membrane. The polypeptide is Large ribosomal subunit protein mL49 (IMG2) (Saccharomyces cerevisiae (strain ATCC 204508 / S288c) (Baker's yeast)).